Consider the following 89-residue polypeptide: MPAPRFKSGSFKKISKRGPGNKTLTHHRRSKVSKAKCGACGALLNGVPRGRKIEIAKLSKTEKRPERPYGGFLCPKCLKRLMIEKARNL.

The disordered stretch occupies residues 1–32; that stretch reads MPAPRFKSGSFKKISKRGPGNKTLTHHRRSKV.

The protein belongs to the eukaryotic ribosomal protein eL34 family.

This chain is Large ribosomal subunit protein eL34, found in Methanococcus aeolicus (strain ATCC BAA-1280 / DSM 17508 / OCM 812 / Nankai-3).